The primary structure comprises 170 residues: MEIDIPKSHKIDTEELSPWISYKKFIDDKTIGYYCVRDQVVIAYKKAYIQDKWDHEKSLINSRLTSYYETVIIELEIPKKSIIVKPKDFKTSGYRTNIAIVRDIFRLKNSQSITESRIFPDIVCFSKYNFGYVYEIGQAAIPSERLETDLDNPLGPGIYFWLDEEKAIQY.

It belongs to the mimivirus L223/L227/L812 family.

This is an uncharacterized protein from Acanthamoeba polyphaga mimivirus (APMV).